The chain runs to 255 residues: Diphthine synthase (255 aa).

S-adenosyl-L-methionine-binding positions include L9, D85, V88, 113-114, L164, A207, and H232; that span reads SI.

The protein belongs to the diphthine synthase family. In terms of assembly, homodimer.

The enzyme catalyses 2-[(3S)-amino-3-carboxypropyl]-L-histidyl-[translation elongation factor 2] + 3 S-adenosyl-L-methionine = diphthine-[translation elongation factor 2] + 3 S-adenosyl-L-homocysteine + 3 H(+). The protein operates within protein modification; peptidyl-diphthamide biosynthesis. Functionally, S-adenosyl-L-methionine-dependent methyltransferase that catalyzes the trimethylation of the amino group of the modified target histidine residue in translation elongation factor 2 (EF-2), to form an intermediate called diphthine. The three successive methylation reactions represent the second step of diphthamide biosynthesis. The sequence is that of Diphthine synthase from Methanococcus maripaludis (strain C5 / ATCC BAA-1333).